The sequence spans 452 residues: Bifunctional protein GlmU (452 aa).

Residues 1-230 form a pyrophosphorylase region; the sequence is MSRSRSAIIL…ADEVLGVNSR (230 aa). UDP-N-acetyl-alpha-D-glucosamine is bound by residues 10 to 13, lysine 24, glutamine 75, and 80 to 81; these read LAAG and GT. Residue aspartate 105 coordinates Mg(2+). The UDP-N-acetyl-alpha-D-glucosamine site is built by glycine 141, glutamate 156, asparagine 171, and asparagine 228. Residue asparagine 228 participates in Mg(2+) binding. Residues 231–251 form a linker region; that stretch reads ADLAEAEAAFQSRMRQSMMAD. The segment at 252-452 is N-acetyltransferase; that stretch reads GVTLIAPETV…ARKARKDSQT (201 aa). UDP-N-acetyl-alpha-D-glucosamine contacts are provided by arginine 317 and lysine 335. Histidine 347 serves as the catalytic Proton acceptor. UDP-N-acetyl-alpha-D-glucosamine is bound by residues tyrosine 350 and asparagine 361. Acetyl-CoA contacts are provided by residues alanine 364, 370 to 371, serine 389, threonine 407, and arginine 424; that span reads NY.

It in the N-terminal section; belongs to the N-acetylglucosamine-1-phosphate uridyltransferase family. This sequence in the C-terminal section; belongs to the transferase hexapeptide repeat family. Homotrimer. Mg(2+) serves as cofactor.

It localises to the cytoplasm. The enzyme catalyses alpha-D-glucosamine 1-phosphate + acetyl-CoA = N-acetyl-alpha-D-glucosamine 1-phosphate + CoA + H(+). It catalyses the reaction N-acetyl-alpha-D-glucosamine 1-phosphate + UTP + H(+) = UDP-N-acetyl-alpha-D-glucosamine + diphosphate. The protein operates within nucleotide-sugar biosynthesis; UDP-N-acetyl-alpha-D-glucosamine biosynthesis; N-acetyl-alpha-D-glucosamine 1-phosphate from alpha-D-glucosamine 6-phosphate (route II): step 2/2. It functions in the pathway nucleotide-sugar biosynthesis; UDP-N-acetyl-alpha-D-glucosamine biosynthesis; UDP-N-acetyl-alpha-D-glucosamine from N-acetyl-alpha-D-glucosamine 1-phosphate: step 1/1. Its pathway is bacterial outer membrane biogenesis; LPS lipid A biosynthesis. Functionally, catalyzes the last two sequential reactions in the de novo biosynthetic pathway for UDP-N-acetylglucosamine (UDP-GlcNAc). The C-terminal domain catalyzes the transfer of acetyl group from acetyl coenzyme A to glucosamine-1-phosphate (GlcN-1-P) to produce N-acetylglucosamine-1-phosphate (GlcNAc-1-P), which is converted into UDP-GlcNAc by the transfer of uridine 5-monophosphate (from uridine 5-triphosphate), a reaction catalyzed by the N-terminal domain. This chain is Bifunctional protein GlmU, found in Maricaulis maris (strain MCS10) (Caulobacter maris).